The chain runs to 126 residues: Holo-[acyl-carrier-protein] synthase (126 aa).

Positions 9 and 58 each coordinate Mg(2+).

Belongs to the P-Pant transferase superfamily. AcpS family. Homodimer. Mg(2+) serves as cofactor.

The protein resides in the cytoplasm. It catalyses the reaction apo-[ACP] + CoA = holo-[ACP] + adenosine 3',5'-bisphosphate + H(+). Its function is as follows. Transfers the 4'-phosphopantetheine moiety from coenzyme A to the 'Ser-36' of acyl-carrier-protein. The polypeptide is Holo-[acyl-carrier-protein] synthase (Escherichia coli O157:H7).